Here is a 760-residue protein sequence, read N- to C-terminus: Colleterpenol synthase (760 aa).

Residues 14 to 335 (ASSGLRSKFR…YTRRYPSKAD (322 aa)) form a terpene cyclase region. Asp-95 contributes to the Mg(2+) binding site. A DDXXD 1 motif is present at residues 95–99 (DDYYD). The NSE/DTE signature appears at 233–241 (NDLYSWPKE). The segment at 336–759 (LRQPEVEFVD…LELVLRRLWI (424 aa)) is prenyltransferase. Positions 359–400 (EEKVVSESVESLPTTEVEDEFSSSDASPGSVDQAISTPPSTT) are disordered. Residues 391 to 400 (QAISTPPSTT) show a composition bias toward polar residues. Positions 477, 480, and 509 each coordinate isopentenyl diphosphate. Residues Asp-516 and Asp-520 each contribute to the Mg(2+) site. Residues 516–520 (DDIED) carry the DDXXD 2 motif. Arg-525 serves as a coordination point for dimethylallyl diphosphate. Arg-526 is an isopentenyl diphosphate binding site. Residues Lys-605, Thr-606, Gln-643, Asn-650, Lys-660, and Lys-670 each coordinate dimethylallyl diphosphate.

The protein in the N-terminal section; belongs to the terpene synthase family. It in the C-terminal section; belongs to the FPP/GGPP synthase family. Hexamer. Mg(2+) serves as cofactor.

The enzyme catalyses 5 isopentenyl diphosphate + dimethylallyl diphosphate = all-trans-hexaprenyl diphosphate + 5 diphosphate. The catalysed reaction is all-trans-hexaprenyl diphosphate + H2O = colleterpenol + diphosphate. Functionally, bifunctional terpene synthase that converts dimethylallyl diphosphate (DMAPP) and isopentenyl diphosphate (IPP) into colleterpenol as a single product. The C-terminal prenyltransferase (PT) domain of CgCS catalyzes formation of hexaprenyl diphosphate (HexPP), whereas the N-terminal terpene cyclase (TC) domain catalyzes the cyclization of HexPP to colleterpenol. The sequence is that of Colleterpenol synthase from Colletotrichum gloeosporioides (Anthracnose fungus).